Here is a 51-residue protein sequence, read N- to C-terminus: Large ribosomal subunit protein bL32c (51 aa).

The protein belongs to the bacterial ribosomal protein bL32 family.

The protein resides in the plastid. The protein localises to the chloroplast. The polypeptide is Large ribosomal subunit protein bL32c (Oenothera elata subsp. hookeri (Hooker's evening primrose)).